Consider the following 236-residue polypeptide: Small ribosomal subunit protein uS3 (236 aa).

Residues 39 to 107 enclose the KH type-2 domain; the sequence is VRHFLMQKLS…PTQLNIAEVR (69 aa).

Belongs to the universal ribosomal protein uS3 family. Part of the 30S ribosomal subunit. Forms a tight complex with proteins S10 and S14.

Binds the lower part of the 30S subunit head. Binds mRNA in the 70S ribosome, positioning it for translation. In Blochmanniella pennsylvanica (strain BPEN), this protein is Small ribosomal subunit protein uS3.